The primary structure comprises 517 residues: Optineurin (517 aa).

Coiled-coil stretches lie at residues 15-127 and 174-453; these read NLGS…DLVA and KAES…LGRH. 2 disordered regions span residues 216-237 and 454-488; these read KLEH…TNAS and SMSE…WQQQ. Residues 222–237 are compositionally biased toward polar residues; it reads SSAQTSLPSAAETNAS. A CCHC NOA-type zinc finger spans residues 487–517; that stretch reads QQNIPDHACPKCGEVLPDLDSLQIHIMDCII. Residues Cys495, Cys498, His511, and Cys515 each contribute to the Zn(2+) site.

Its subcellular location is the cytoplasm. It is found in the perinuclear region. The protein localises to the golgi apparatus. The protein resides in the trans-Golgi network. It localises to the cytoplasmic vesicle. Its subcellular location is the recycling endosome. It is found in the autophagosome. Probably part of the TNF-alpha signaling pathway that can shift the equilibrium toward induction of cell death. May act by regulating membrane trafficking and cellular morphogenesis. In Danio rerio (Zebrafish), this protein is Optineurin (optn).